Reading from the N-terminus, the 231-residue chain is PX domain-containing protein 1 (231 aa).

Residues 1–134 (MASAVFEGTS…TFFERSPLDQ (134 aa)) enclose the PX domain.

The chain is PX domain-containing protein 1 (PXDC1) from Homo sapiens (Human).